The chain runs to 741 residues: Phosphoribosylformylglycinamidine synthase subunit PurL (741 aa).

The active site involves H54. Y57 and K98 together coordinate ATP. E100 is a Mg(2+) binding site. Residues 101-104 (SHNH) and R123 each bind substrate. H102 serves as the catalytic Proton acceptor. Position 124 (D124) interacts with Mg(2+). Q251 is a binding site for substrate. D279 lines the Mg(2+) pocket. 323–325 (ESQ) contributes to the substrate binding site. D510 and G547 together coordinate ATP. N548 lines the Mg(2+) pocket. S550 is a substrate binding site.

The protein belongs to the FGAMS family. In terms of assembly, monomer. Part of the FGAM synthase complex composed of 1 PurL, 1 PurQ and 2 PurS subunits.

The protein localises to the cytoplasm. It catalyses the reaction N(2)-formyl-N(1)-(5-phospho-beta-D-ribosyl)glycinamide + L-glutamine + ATP + H2O = 2-formamido-N(1)-(5-O-phospho-beta-D-ribosyl)acetamidine + L-glutamate + ADP + phosphate + H(+). Its pathway is purine metabolism; IMP biosynthesis via de novo pathway; 5-amino-1-(5-phospho-D-ribosyl)imidazole from N(2)-formyl-N(1)-(5-phospho-D-ribosyl)glycinamide: step 1/2. Functionally, part of the phosphoribosylformylglycinamidine synthase complex involved in the purines biosynthetic pathway. Catalyzes the ATP-dependent conversion of formylglycinamide ribonucleotide (FGAR) and glutamine to yield formylglycinamidine ribonucleotide (FGAM) and glutamate. The FGAM synthase complex is composed of three subunits. PurQ produces an ammonia molecule by converting glutamine to glutamate. PurL transfers the ammonia molecule to FGAR to form FGAM in an ATP-dependent manner. PurS interacts with PurQ and PurL and is thought to assist in the transfer of the ammonia molecule from PurQ to PurL. This is Phosphoribosylformylglycinamidine synthase subunit PurL from Picrophilus torridus (strain ATCC 700027 / DSM 9790 / JCM 10055 / NBRC 100828 / KAW 2/3).